The chain runs to 37 residues: Large ribosomal subunit protein bL36c (37 aa).

This sequence belongs to the bacterial ribosomal protein bL36 family.

It is found in the plastid. The protein resides in the chloroplast. The sequence is that of Large ribosomal subunit protein bL36c from Thalassiosira pseudonana (Marine diatom).